The chain runs to 242 residues: Lactate utilization protein A 2 (242 aa).

It belongs to the LutA/YkgE family.

In terms of biological role, is involved in L-lactate degradation and allows cells to grow with lactate as the sole carbon source. This chain is Lactate utilization protein A 2, found in Bacillus cereus (strain Q1).